Reading from the N-terminus, the 836-residue chain is Protein translocase subunit SecA (836 aa).

ATP is bound by residues Q85, 103–107, and D492; that span reads GEGKT. Zn(2+)-binding residues include C820, C822, C831, and C832.

The protein belongs to the SecA family. As to quaternary structure, monomer and homodimer. Part of the essential Sec protein translocation apparatus which comprises SecA, SecYEG and auxiliary proteins SecDF. Other proteins may also be involved. The cofactor is Zn(2+).

The protein resides in the cell membrane. It localises to the cytoplasm. The enzyme catalyses ATP + H2O + cellular proteinSide 1 = ADP + phosphate + cellular proteinSide 2.. Its function is as follows. Part of the Sec protein translocase complex. Interacts with the SecYEG preprotein conducting channel. Has a central role in coupling the hydrolysis of ATP to the transfer of proteins into and across the cell membrane, serving as an ATP-driven molecular motor driving the stepwise translocation of polypeptide chains across the membrane. The polypeptide is Protein translocase subunit SecA (Clostridium botulinum (strain Eklund 17B / Type B)).